We begin with the raw amino-acid sequence, 258 residues long: Regulatory protein RecX (258 aa).

It belongs to the RecX family.

The protein localises to the cytoplasm. Its function is as follows. Modulates RecA activity. This chain is Regulatory protein RecX, found in Streptococcus pneumoniae (strain P1031).